The primary structure comprises 432 residues: Adenosylhomocysteinase (432 aa).

At serine 2 the chain carries N-acetylserine. Substrate is bound by residues threonine 57, aspartate 131, and glutamate 156. Position 157–159 (157–159 (TTT)) interacts with NAD(+). Serine 183 carries the post-translational modification Phosphoserine. 2 residues coordinate substrate: lysine 186 and aspartate 190. Lysine 186 is modified (N6-(2-hydroxyisobutyryl)lysine). Phosphotyrosine is present on tyrosine 193. NAD(+) is bound by residues 222 to 227 (GDVGKG), glutamate 243, asparagine 248, 299 to 301 (IGH), asparagine 346, and histidine 353.

This sequence belongs to the adenosylhomocysteinase family. Homotetramer. Interaction with AHCYL1. The cofactor is NAD(+).

Its subcellular location is the cytoplasm. It localises to the melanosome. The protein resides in the nucleus. It is found in the endoplasmic reticulum. The catalysed reaction is S-adenosyl-L-homocysteine + H2O = L-homocysteine + adenosine. The protein operates within amino-acid biosynthesis; L-homocysteine biosynthesis; L-homocysteine from S-adenosyl-L-homocysteine: step 1/1. Functionally, catalyzes the hydrolysis of S-adenosyl-L-homocysteine to form adenosine and homocysteine. Binds copper ions. The protein is Adenosylhomocysteinase (AHCY) of Homo sapiens (Human).